A 259-amino-acid chain; its full sequence is Aliphatic sulfonates import ATP-binding protein SsuB 2 (259 aa).

Positions 17 to 238 (LDILGLWKGF…VRSSQAFTSI (222 aa)) constitute an ABC transporter domain. 49–56 (GRSGCGKS) is an ATP binding site.

This sequence belongs to the ABC transporter superfamily. Aliphatic sulfonates importer (TC 3.A.1.17.2) family. In terms of assembly, the complex is composed of two ATP-binding proteins (SsuB), two transmembrane proteins (SsuC) and a solute-binding protein (SsuA).

The protein resides in the cell inner membrane. It carries out the reaction ATP + H2O + aliphatic sulfonate-[sulfonate-binding protein]Side 1 = ADP + phosphate + aliphatic sulfonateSide 2 + [sulfonate-binding protein]Side 1.. Functionally, part of the ABC transporter complex SsuABC involved in aliphatic sulfonates import. Responsible for energy coupling to the transport system. This Agrobacterium fabrum (strain C58 / ATCC 33970) (Agrobacterium tumefaciens (strain C58)) protein is Aliphatic sulfonates import ATP-binding protein SsuB 2.